The sequence spans 466 residues: 23S rRNA (uracil(1939)-C(5))-methyltransferase RlmD (466 aa).

Residues 1 to 54 enclose the TRAM domain; the sequence is MVDVLNIESLDLEARGIAHRDGKVLFVEGALPGERVTVQTVRRKPSYEIAKVEE. The [4Fe-4S] cluster site is built by Cys67, Cys73, Cys76, and Cys155. S-adenosyl-L-methionine is bound by residues Gln264, Phe293, Asn298, Glu314, Asn342, and Asp363. The active-site Nucleophile is the Cys393.

Belongs to the class I-like SAM-binding methyltransferase superfamily. RNA M5U methyltransferase family. RlmD subfamily.

The enzyme catalyses uridine(1939) in 23S rRNA + S-adenosyl-L-methionine = 5-methyluridine(1939) in 23S rRNA + S-adenosyl-L-homocysteine + H(+). Functionally, catalyzes the formation of 5-methyl-uridine at position 1939 (m5U1939) in 23S rRNA. The sequence is that of 23S rRNA (uracil(1939)-C(5))-methyltransferase RlmD from Bordetella parapertussis (strain 12822 / ATCC BAA-587 / NCTC 13253).